The chain runs to 1738 residues: MLKRKQSSRVEAQPVTDFGPDESLSDNADILWINKPWVHSLLRICAIISVISVCMNTPMTFEHYPPLQYVTFTLDTLLMFLYTAEMIAKMHIRGIVKGDSSYVKDRWCVFDGFMVFCLWVSLVLQVFEIADIVDQMSPWGMLRIPRPLIMIRAFRIYFRFELPRTRITNILKRSGEQIWSVSIFLLFFLLLYGILGVQMFGTFTYHCVVNDTKPGNVTWNSLAIPDTHCSPELEEGYQCPPGFKCMDLEDLGLSRQELGYSGFNEIGTSIFTVYEASSQEGWVFLMYRAIDSFPRWRSYFYFITLIFFLAWLVKNVFIAVIIETFAEIRVQFQQMWGTRSSTTSTATTQMFHEDAAGGWQLVAVDVNKPQGRAPACLQKMMRSSVFHMFILSMVTVDVIVAASNYYKGENFRRQYDEFYLAEVAFTVLFDLEALLKIWCLGFTGYISSSLHKFELLLVIGTTLHVYPDLYHSQFTYFQVLRVVRLIKISPALEDFVYKIFGPGKKLGSLVVFTASLLIVMSAISLQMFCFVEELDRFTTFPRAFMSMFQILTQEGWVDVMDQTLNAVGHMWAPLVAIYFILYHLFATLILLSLFVAVILDNLELDEDLKKLKQLKQSEANADTKEKLPLRLRIFEKFPNRPQMVKISKLPSDFTVPKIRESFMKQFIDRQQQDTCCLFRILPSTSSSSCDNPKKPTAEDNKYIDQKLRKSVFSIRARNLLEKETAVTKILRACTRQRMLSGSFEGQPAKERSILSVQHHIRQERRSLRHGSNSQRISRGKSLETLTQDHSNTVRYRNAQREDSEIKMIQEKKEQAEMKRKVQEEELRENHPYFDKPLFIVGREHRFRNFCRVVVRARFNASKTDPVTGAVKNTKYHQLYDLLGLVTYLDWVMITVTICSCISMMFESPFRRVMHAPTLQIAEYVFVIFMSIELNLKIMADGLFFTPTAVIRDFGGVMDIFIYLVSLIFLCWMPQNVPAESGAQLLMVLRCLRPLRIFKLVPQMRKVVRELFSGFKEIFLVSILLLTLMLVFASFGVQLFAGKLAKCNDPNIIRREDCNGIFRINVSVSKNLNLKLRPGEKKPGFWVPRVWANPRNFNFDNVGNAMLALFEVLSLKGWVEVRDVIIHRVGPIHGIYIHVFVFLGCMIGLTLFVGVVIANFNENKGTALLTVDQRRWEDLKSRLKIAQPLHLPPRPDNDGFRAKMYDITQHPFFKRTIALLVLAQSVLLSVKWDVDDPVTVPLATMSVVFTFIFVLEVTMKIIAMSPAGFWQSRRNRYDLLVTSLGVVWVVLHFALLNAYTYMMGACVIVFRFFSICGKHVTLKMLLLTVVVSMYKSFFIIVGMFLLLLCYAFAGVVLFGTVKYGENINRHANFSSAGKAITVLFRIVTGEDWNKIMHDCMVQPPFCTPDEFTYWATDCGNYAGALMYFCSFYVIIAYIMLNLLVAIIVENFSLFYSTEEDQLLSYNDLRHFQIIWNMVDDKREGVIPTFRVKFLLRLLRGRLEVDLDKDKLLFKHMCYEMERLHNGGDVTFHDVLSMLSYRSVDIRKSLQLEELLAREQLEYTIEEEVAKQTIRMWLKKCLKRIRAKQQQSCSIIHSLRESQEQERSRFLNPPSIETTQPSEDSNANSQDHSMQPETSSQQQLLSPTLSDRGGSRQDAADTGKPQRKIGQWRLPSAPKPISHSVSSVNLRFGGRTTMKTVVCKMNPMPDTASCGSEVKKWWTRQLTVESDESGDDLLDI.

Residues 1–36 (MLKRKQSSRVEAQPVTDFGPDESLSDNADILWINKP) are Cytoplasmic-facing. A helical transmembrane segment spans residues 37 to 57 (WVHSLLRICAIISVISVCMNT). Topologically, residues 58-65 (PMTFEHYP) are extracellular. The chain crosses the membrane as a helical span at residues 66–90 (PLQYVTFTLDTLLMFLYTAEMIAKM). Residues 91–106 (HIRGIVKGDSSYVKDR) lie on the Cytoplasmic side of the membrane. Residues 107–129 (WCVFDGFMVFCLWVSLVLQVFEI) form a helical membrane-spanning segment. The Extracellular portion of the chain corresponds to 130 to 137 (ADIVDQMS). A helical; Voltage-sensor membrane pass occupies residues 138-158 (PWGMLRIPRPLIMIRAFRIYF). Topologically, residues 159-173 (RFELPRTRITNILKR) are cytoplasmic. Residues 174 to 199 (SGEQIWSVSIFLLFFLLLYGILGVQM) traverse the membrane as a helical segment. Over 200–269 (FGTFTYHCVV…YSGFNEIGTS (70 aa)) the chain is Extracellular. Cystine bridges form between Cys-207-Cys-239 and Cys-229-Cys-245. N-linked (GlcNAc...) asparagine glycans are attached at residues Asn-210 and Asn-216. The segment at residues 270 to 289 (IFTVYEASSQEGWVFLMYRA) is an intramembrane region (pore-forming). At 290–294 (IDSFP) the chain is on the extracellular side. The helical transmembrane segment at 295–322 (RWRSYFYFITLIFFLAWLVKNVFIAVII) threads the bilayer. Residues 323-382 (ETFAEIRVQFQQMWGTRSSTTSTATTQMFHEDAAGGWQLVAVDVNKPQGRAPACLQKMMR) are Cytoplasmic-facing. A helical transmembrane segment spans residues 383–403 (SSVFHMFILSMVTVDVIVAAS). Topologically, residues 404-416 (NYYKGENFRRQYD) are extracellular. The chain crosses the membrane as a helical span at residues 417-439 (EFYLAEVAFTVLFDLEALLKIWC). Residues 440–447 (LGFTGYIS) are Cytoplasmic-facing. The helical transmembrane segment at 448-468 (SSLHKFELLLVIGTTLHVYPD) threads the bilayer. Topologically, residues 469–472 (LYHS) are extracellular. Residues 473–492 (QFTYFQVLRVVRLIKISPAL) traverse the membrane as a helical; Voltage-sensor segment. At 493 to 502 (EDFVYKIFGP) the chain is on the cytoplasmic side. The chain crosses the membrane as a helical span at residues 503-530 (GKKLGSLVVFTASLLIVMSAISLQMFCF). The Extracellular segment spans residues 531 to 543 (VEELDRFTTFPRA). Residues 544-563 (FMSMFQILTQEGWVDVMDQT) constitute an intramembrane region (pore-forming). Over 564-578 (LNAVGHMWAPLVAIY) the chain is Extracellular. A helical membrane pass occupies residues 579–599 (FILYHLFATLILLSLFVAVIL). Topologically, residues 600-886 (DNLELDEDLK…QLYDLLGLVT (287 aa)) are cytoplasmic. Residues 762–785 (QERRSLRHGSNSQRISRGKSLETL) are disordered. A coiled-coil region spans residues 795–830 (YRNAQREDSEIKMIQEKKEQAEMKRKVQEEELRENH). The chain crosses the membrane as a helical span at residues 887–906 (YLDWVMITVTICSCISMMFE). The Extracellular portion of the chain corresponds to 907 to 915 (SPFRRVMHA). The helical transmembrane segment at 916-939 (PTLQIAEYVFVIFMSIELNLKIMA) threads the bilayer. At 940 to 947 (DGLFFTPT) the chain is on the cytoplasmic side. A helical transmembrane segment spans residues 948-972 (AVIRDFGGVMDIFIYLVSLIFLCWM). The Extracellular segment spans residues 973 to 980 (PQNVPAES). Residues 981–1003 (GAQLLMVLRCLRPLRIFKLVPQM) traverse the membrane as a helical; Voltage-sensor segment. At 1004 to 1015 (RKVVRELFSGFK) the chain is on the cytoplasmic side. Residues 1016–1039 (EIFLVSILLLTLMLVFASFGVQLF) traverse the membrane as a helical segment. At 1040-1104 (AGKLAKCNDP…NFNFDNVGNA (65 aa)) the chain is on the extracellular side. Cys-1046 and Cys-1057 form a disulfide bridge. Asn-1064 carries an N-linked (GlcNAc...) asparagine glycan. Positions 1105–1124 (MLALFEVLSLKGWVEVRDVI) form an intramembrane region, pore-forming. Residues 1125–1129 (IHRVG) lie on the Extracellular side of the membrane. A helical transmembrane segment spans residues 1130–1159 (PIHGIYIHVFVFLGCMIGLTLFVGVVIANF). Over 1160–1210 (NENKGTALLTVDQRRWEDLKSRLKIAQPLHLPPRPDNDGFRAKMYDITQHP) the chain is Cytoplasmic. The chain crosses the membrane as a helical span at residues 1211 to 1227 (FFKRTIALLVLAQSVLL). The Extracellular portion of the chain corresponds to 1228 to 1236 (SVKWDVDDP). The helical transmembrane segment at 1237–1260 (VTVPLATMSVVFTFIFVLEVTMKI) threads the bilayer. At 1261-1271 (IAMSPAGFWQS) the chain is on the cytoplasmic side. The helical transmembrane segment at 1272 to 1293 (RRNRYDLLVTSLGVVWVVLHFA) threads the bilayer. Residues 1294-1296 (LLN) are Extracellular-facing. The helical; Voltage-sensor transmembrane segment at 1297–1318 (AYTYMMGACVIVFRFFSICGKH) threads the bilayer. At 1319–1331 (VTLKMLLLTVVVS) the chain is on the cytoplasmic side. Residues 1332–1357 (MYKSFFIIVGMFLLLLCYAFAGVVLF) traverse the membrane as a helical segment. Topologically, residues 1358-1378 (GTVKYGENINRHANFSSAGKA) are extracellular. Residues 1379 to 1398 (ITVLFRIVTGEDWNKIMHDC) constitute an intramembrane region (pore-forming). Topologically, residues 1399 to 1420 (MVQPPFCTPDEFTYWATDCGNY) are extracellular. Cys-1405 and Cys-1417 are disulfide-bonded. Residues 1421–1447 (AGALMYFCSFYVIIAYIMLNLLVAIIV) form a helical membrane-spanning segment. At 1448–1738 (ENFSLFYSTE…DESGDDLLDI (291 aa)) the chain is on the cytoplasmic side. The tract at residues 1602–1679 (EQERSRFLNP…WRLPSAPKPI (78 aa)) is disordered. The segment covering 1613 to 1631 (SIETTQPSEDSNANSQDHS) has biased composition (polar residues). Over residues 1633 to 1648 (QPETSSQQQLLSPTLS) the composition is skewed to low complexity.

Belongs to the NALCN family. As to quaternary structure, found in a complex with NALCN, UNC79, UNC80 and NACL1; these auxiliary subunits are indispensable for the function of the NALCN channel. Interacts with UNC80; required for the NALCN activation/inhibition by GPCRs in neurons. Found in a complex with NALCN, UNC79 and UNC80; UNC80 bridges NALCN to UNC79. Interacts with CHRM3. Post-translationally, phosphorylated on tyrosine residues. Widely expressed in the brain and spinal cord neurons. Expressed also in pancreatic islet cells.

The protein resides in the cell membrane. The catalysed reaction is Na(+)(in) = Na(+)(out). Inhibited by low micromolar concentrations of Gd(3+) and high micromolar concentrations of verapamil. Insensitive to tetrodotoxin (TTX) and potentiated by low external Ca(2+) concentration. Its function is as follows. Voltage-gated ion channel responsible for the resting Na(+) permeability that controls neuronal excitability. NALCN channel functions as a multi-protein complex, which consists at least of NALCN, NALF1, UNC79 and UNC80. NALCN is the voltage-sensing, pore-forming subunit of the NALCN channel complex. NALCN channel complex is constitutively active and conducts monovalent cations but is blocked by physiological concentrations of extracellular divalent cations. In addition to its role in regulating neuronal excitability, is required for normal respiratory rhythm, systemic osmoregulation by controlling the serum sodium concentration and in the regulation of the intestinal pace-making activity in the interstitial cells of Cajal. Plays a critical role in both maintenance of spontaneous firing of substantia nigra pars reticulata (SNr) neurons and physiological modulation of SNr neuron excitability. NALCN channel is also activated by neuropeptides such as neurotensin and substance P (SP) through a SRC family kinases-dependent pathway. In addition, NALCN activity is enhanced/modulated by several GPCRs, such as CHRM3. This chain is Sodium leak channel NALCN (Nalcn), found in Mus musculus (Mouse).